The sequence spans 344 residues: Galactinol synthase 1 (344 aa).

Residue Lys-111 is part of the active site. The Mn(2+) site is built by Asp-127, Asp-129, and His-265.

This sequence belongs to the glycosyltransferase 8 family. Galactosyltransferase subfamily. Requires a divalent metal cation as cofactor. Accumulates in mature seeds. Expressed in seedlings (axes and cotyledons), meristems, vascular tissues and emerging lateral roots. Present in abscission zones.

It localises to the cytoplasm. The enzyme catalyses myo-inositol + UDP-alpha-D-galactose = alpha-D-galactosyl-(1-&gt;3)-1D-myo-inositol + UDP + H(+). In terms of biological role, galactinol synthase involved in the biosynthesis of raffinose family oligosaccharides (RFOs) that function as osmoprotectants. Promotes plant stress tolerance such as heat, chilling, salinity and methylviologen (MV), a superoxide radical generating drug, by mediating raffinose accumulation, an osmoprotective substance. In Arabidopsis thaliana (Mouse-ear cress), this protein is Galactinol synthase 1 (GOLS1).